We begin with the raw amino-acid sequence, 214 residues long: tRNA (guanine-N(7)-)-methyltransferase (214 aa).

Residues E44, E69, D96, and D118 each contribute to the S-adenosyl-L-methionine site. D118 is an active-site residue. Residues K122, D154, and 191-194 (TEYE) each bind substrate.

The protein belongs to the class I-like SAM-binding methyltransferase superfamily. TrmB family.

It carries out the reaction guanosine(46) in tRNA + S-adenosyl-L-methionine = N(7)-methylguanosine(46) in tRNA + S-adenosyl-L-homocysteine. It participates in tRNA modification; N(7)-methylguanine-tRNA biosynthesis. In terms of biological role, catalyzes the formation of N(7)-methylguanine at position 46 (m7G46) in tRNA. In Listeria innocua serovar 6a (strain ATCC BAA-680 / CLIP 11262), this protein is tRNA (guanine-N(7)-)-methyltransferase.